A 488-amino-acid polypeptide reads, in one-letter code: N-succinylglutamate 5-semialdehyde dehydrogenase (488 aa).

NAD(+) is bound at residue Gly-221–Gly-226. Residues Glu-244 and Cys-278 contribute to the active site.

The protein belongs to the aldehyde dehydrogenase family. AstD subfamily.

The enzyme catalyses N-succinyl-L-glutamate 5-semialdehyde + NAD(+) + H2O = N-succinyl-L-glutamate + NADH + 2 H(+). The protein operates within amino-acid degradation; L-arginine degradation via AST pathway; L-glutamate and succinate from L-arginine: step 4/5. In terms of biological role, catalyzes the NAD-dependent reduction of succinylglutamate semialdehyde into succinylglutamate. This chain is N-succinylglutamate 5-semialdehyde dehydrogenase, found in Pseudomonas fluorescens (strain SBW25).